We begin with the raw amino-acid sequence, 190 residues long: Potassium-transporting ATPase KdpC subunit (190 aa).

A helical membrane pass occupies residues 15 to 35 (LWILTALIYPAIVLVIGQLVF).

It belongs to the KdpC family. In terms of assembly, the system is composed of three essential subunits: KdpA, KdpB and KdpC.

The protein resides in the cell inner membrane. Part of the high-affinity ATP-driven potassium transport (or Kdp) system, which catalyzes the hydrolysis of ATP coupled with the electrogenic transport of potassium into the cytoplasm. This subunit acts as a catalytic chaperone that increases the ATP-binding affinity of the ATP-hydrolyzing subunit KdpB by the formation of a transient KdpB/KdpC/ATP ternary complex. This Synechocystis sp. (strain ATCC 27184 / PCC 6803 / Kazusa) protein is Potassium-transporting ATPase KdpC subunit.